A 567-amino-acid polypeptide reads, in one-letter code: Pyruvate decarboxylase (567 aa).

2 residues coordinate pyruvate: Asp28 and His117. Residues Thr393 and 416–418 (GSI) contribute to the thiamine diphosphate site. Asp447 is a Mg(2+) binding site. Thiamine diphosphate is bound by residues 448–449 (GS) and 475–480 (NDGYTI). 2 residues coordinate Mg(2+): Asn475 and Gly477. Glu481 is a pyruvate binding site.

Belongs to the TPP enzyme family. Homotetramer. Mg(2+) is required as a cofactor. Thiamine diphosphate serves as cofactor.

It localises to the cytoplasm. The catalysed reaction is a 2-oxocarboxylate + H(+) = an aldehyde + CO2. It carries out the reaction pyruvate + H(+) = acetaldehyde + CO2. This chain is Pyruvate decarboxylase (PDC11), found in Candida albicans (strain SC5314 / ATCC MYA-2876) (Yeast).